Here is a 1759-residue protein sequence, read N- to C-terminus: Zinc finger protein castor homolog 1 (1759 aa).

Disordered stretches follow at residues Met-1–Lys-26 and Lys-46–Arg-175. 2 stretches are compositionally biased toward basic and acidic residues: residues Pro-77–Ile-88 and Glu-137–Ser-160. The span at Gly-161–Ala-171 shows a compositional bias: polar residues. Lys-288 participates in a covalent cross-link: Glycyl lysine isopeptide (Lys-Gly) (interchain with G-Cter in SUMO2). The disordered stretch occupies residues Ser-374–Leu-420. Over residues Ala-387 to Ala-396 the composition is skewed to pro residues. Positions Pro-397 to Ala-406 are enriched in low complexity. Pro residues predominate over residues Pro-407–Pro-417. 3 consecutive C2H2-type zinc fingers follow at residues Tyr-551–His-575, Phe-610–His-634, and Phe-668–His-692. Disordered regions lie at residues Thr-686–Asp-723, Ser-736–Leu-776, Val-824–Gly-843, and Ala-889–Ala-949. Positions Ser-687 to Arg-698 are enriched in basic residues. Residues Ser-699–Ala-712 show a composition bias toward low complexity. A phosphoserine mark is found at Ser-720 and Ser-721. Residues Ser-736–Ala-764 are compositionally biased toward low complexity. Residues Ala-925–Ser-939 are compositionally biased toward basic and acidic residues. Residue Lys-975 forms a Glycyl lysine isopeptide (Lys-Gly) (interchain with G-Cter in SUMO2) linkage. Phosphoserine is present on Ser-981. Residues Phe-1031–His-1055 form a C2H2-type 4 zinc finger. The tract at residues Thr-1067–Pro-1111 is disordered. Over residues Pro-1081 to Pro-1091 the composition is skewed to pro residues. The C2H2-type 5 zinc-finger motif lies at Phe-1300–His-1324. The segment at Glu-1367–Ser-1392 is disordered. C2H2-type zinc fingers lie at residues Tyr-1457 to His-1481, Phe-1515 to His-1537, and Phe-1571 to His-1595. 2 disordered regions span residues Asp-1589 to Leu-1620 and Leu-1643 to Arg-1736. The span at Ala-1655–Ser-1673 shows a compositional bias: low complexity. Residues Ser-1674–Leu-1723 show a composition bias toward acidic residues. The span at Pro-1724–Arg-1736 shows a compositional bias: low complexity.

Expressed in heart, lung, skeletal muscle, pancreas, testis, small intestine, and stomach, but it is not detectable in the adult brain.

It is found in the nucleus. In terms of biological role, transcriptional activator. Involved in vascular assembly and morphogenesis through direct transcriptional regulation of EGFL7. The protein is Zinc finger protein castor homolog 1 (CASZ1) of Homo sapiens (Human).